The primary structure comprises 147 residues: MVEWTDSERAIINDIFATLDYEEIGRKSLTRCLIVYPWTQRYFGAFGNLYNAATIMANPLIAAHGTKILHGLDRALKNMDDIKNTYAELSLLHSDKLHVDPDNFRLLADCLTVVIAAKMGAAFTVDTQVAWQKFLSVVVSALGRQYH.

The Globin domain occupies 3–147 (EWTDSERAII…VVSALGRQYH (145 aa)). Heme b-binding residues include histidine 64 and histidine 93.

It belongs to the globin family. As to quaternary structure, hb 3 is a heterotetramer of two alpha-2 and two beta-2 chains. Red blood cells.

Its function is as follows. Involved in oxygen transport from gills to the various peripheral tissues. This is Hemoglobin subunit beta-2 (hbb2) from Arctogadus glacialis (Arctic cod).